We begin with the raw amino-acid sequence, 360 residues long: MSNSNSGKVRVAVVYGGRSSEHSVSCVSAGAIMAHLDPEKYDVIPVGITVDGAWVVGETDPQKLTLIDRTMPEVEHREEVRPSLDPAHRGEFHFSDGSLYATADVIFPVLHGRFGEDGTVQGLFALSDIPVVGPGVLASAAGMDKEYTKKLMAAEGLPIGREVILRDRTELTEAEKNLLGLPVFVKPARGGSSIGISRVTAWEDFNKAVGLARAHDEKVIVESEIVGSEVECGVLQYPDGRIVASVPALLSGTESGAGGFYDFDTKYLDNVVTAEIPAPLDEKTTELIQSLAVESFQALACEGLARVDFFVTANGPVLNEINTMPGFTPISMYPQMFTASGVAYEELLDVLVQQALHRDN.

The 205-residue stretch at Lys-149–Gln-353 folds into the ATP-grasp domain. Lys-176–Glu-231 contacts ATP. Residues Asp-308, Glu-320, and Asn-322 each coordinate Mg(2+).

The protein belongs to the D-alanine--D-alanine ligase family. Mg(2+) is required as a cofactor. Mn(2+) serves as cofactor.

The protein resides in the cytoplasm. It carries out the reaction 2 D-alanine + ATP = D-alanyl-D-alanine + ADP + phosphate + H(+). It functions in the pathway cell wall biogenesis; peptidoglycan biosynthesis. In terms of biological role, cell wall formation. The sequence is that of D-alanine--D-alanine ligase from Corynebacterium glutamicum (strain R).